A 343-amino-acid chain; its full sequence is Aspartate-semialdehyde dehydrogenase (343 aa).

NADP(+) is bound at residue 11-14; sequence TGMV. Residue Arg109 coordinates phosphate. The active-site Acyl-thioester intermediate is Cys148. Gln174 lines the substrate pocket. Residue 177–178 coordinates NADP(+); that stretch reads SG. Glu200 serves as a coordination point for substrate. Phosphate is bound at residue Lys203. Position 233 (Arg233) interacts with substrate. His240 serves as the catalytic Proton acceptor. 321 to 322 serves as a coordination point for NADP(+); sequence NT.

This sequence belongs to the aspartate-semialdehyde dehydrogenase family. In terms of assembly, homodimer.

It catalyses the reaction L-aspartate 4-semialdehyde + phosphate + NADP(+) = 4-phospho-L-aspartate + NADPH + H(+). It functions in the pathway amino-acid biosynthesis; L-lysine biosynthesis via DAP pathway; (S)-tetrahydrodipicolinate from L-aspartate: step 2/4. Its pathway is amino-acid biosynthesis; L-methionine biosynthesis via de novo pathway; L-homoserine from L-aspartate: step 2/3. It participates in amino-acid biosynthesis; L-threonine biosynthesis; L-threonine from L-aspartate: step 2/5. In terms of biological role, catalyzes the NADPH-dependent formation of L-aspartate-semialdehyde (L-ASA) by the reductive dephosphorylation of L-aspartyl-4-phosphate. The chain is Aspartate-semialdehyde dehydrogenase from Archaeoglobus fulgidus (strain ATCC 49558 / DSM 4304 / JCM 9628 / NBRC 100126 / VC-16).